The following is a 431-amino-acid chain: Probable oxidoreductase OrdL (431 aa).

The polypeptide is Probable oxidoreductase OrdL (ordL) (Haemophilus influenzae (strain ATCC 51907 / DSM 11121 / KW20 / Rd)).